The following is a 525-amino-acid chain: GMP synthase [glutamine-hydrolyzing] (525 aa).

The Glutamine amidotransferase type-1 domain occupies 9-207; it reads RILILDFGSQ…VLGICGCEAL (199 aa). The active-site Nucleophile is the Cys86. Catalysis depends on residues His181 and Glu183. The GMPS ATP-PPase domain maps to 208-400; the sequence is WTSATIIEDA…LGLPYDMLYR (193 aa). 235–241 serves as a coordination point for ATP; the sequence is SGGVDSS.

In terms of assembly, homodimer.

The catalysed reaction is XMP + L-glutamine + ATP + H2O = GMP + L-glutamate + AMP + diphosphate + 2 H(+). It participates in purine metabolism; GMP biosynthesis; GMP from XMP (L-Gln route): step 1/1. In terms of biological role, catalyzes the synthesis of GMP from XMP. The polypeptide is GMP synthase [glutamine-hydrolyzing] (Yersinia pestis bv. Antiqua (strain Antiqua)).